Consider the following 437-residue polypeptide: tRNA-2-methylthio-N(6)-dimethylallyladenosine synthase (437 aa).

An MTTase N-terminal domain is found at 2 to 117 (KHLYIKTFGC…LPQMIQRALD (116 aa)). Cysteine 11, cysteine 48, cysteine 80, cysteine 154, cysteine 158, and cysteine 161 together coordinate [4Fe-4S] cluster. Residues 140–372 (RAQGVVGQVT…QQLLNTQQLQ (233 aa)) form the Radical SAM core domain. The TRAM domain maps to 375-437 (KARVGRRESV…LPNSLRGRLV (63 aa)).

This sequence belongs to the methylthiotransferase family. MiaB subfamily. Monomer. [4Fe-4S] cluster is required as a cofactor.

The protein localises to the cytoplasm. The catalysed reaction is N(6)-dimethylallyladenosine(37) in tRNA + (sulfur carrier)-SH + AH2 + 2 S-adenosyl-L-methionine = 2-methylsulfanyl-N(6)-dimethylallyladenosine(37) in tRNA + (sulfur carrier)-H + 5'-deoxyadenosine + L-methionine + A + S-adenosyl-L-homocysteine + 2 H(+). Its function is as follows. Catalyzes the methylthiolation of N6-(dimethylallyl)adenosine (i(6)A), leading to the formation of 2-methylthio-N6-(dimethylallyl)adenosine (ms(2)i(6)A) at position 37 in tRNAs that read codons beginning with uridine. The chain is tRNA-2-methylthio-N(6)-dimethylallyladenosine synthase from Magnetococcus marinus (strain ATCC BAA-1437 / JCM 17883 / MC-1).